The primary structure comprises 453 residues: Macrophage scavenger receptor types I and II (453 aa).

Over 1–50 (MAQWDDFPDQQEDTDSCTESVKFDARSVTALLPPHPKNGPTLQERMKSYK) the chain is Cytoplasmic. Serine 27 carries the post-translational modification Phosphoserine. A helical; Signal-anchor for type II membrane protein membrane pass occupies residues 51–76 (TALITLYLIVFVVLVPIIGIVAAQLL). The interval 77–108 (KWETKNCTVGSVNADISPSPEGKGNGSEDEMR) is spacer. The Extracellular portion of the chain corresponds to 77–453 (KWETKNCTVG…DEDAGVTCTT (377 aa)). Residues asparagine 82, asparagine 101, asparagine 142, asparagine 183, asparagine 220, asparagine 248, and asparagine 266 are each glycosylated (N-linked (GlcNAc...) asparagine). Residues 194-255 (ETLNGRVQEN…LNNITNDLRL (62 aa)) adopt a coiled-coil conformation. Disordered stretches follow at residues 267-295 (ITLLQGPPGPPGEKGDRGPPGQNGIPGFP) and 313-349 (PGVRGFPGPMGKTGKPGLNGQKGQKGEKGSGSMQRQS). Positions 272–343 (GPPGPPGEKG…KGQKGEKGSG (72 aa)) constitute a Collagen-like domain. Residues 352-452 (VRLVGGSGPH…HDEDAGVTCT (101 aa)) form the SRCR domain. Cystine bridges form between cysteine 377–cysteine 441, cysteine 390–cysteine 451, and cysteine 421–cysteine 431.

As to quaternary structure, homotrimer. Interacts with MYO18A.

It is found in the membrane. In terms of biological role, membrane glycoproteins implicated in the pathologic deposition of cholesterol in arterial walls during atherogenesis. Two types of receptor subunits exist. These receptors mediate the endocytosis of a diverse group of macromolecules, including modified low density lipoproteins (LDL). This is Macrophage scavenger receptor types I and II (MSR1) from Bos taurus (Bovine).